The sequence spans 402 residues: Nicotinate phosphoribosyltransferase (402 aa).

H221 is modified (phosphohistidine; by autocatalysis).

It belongs to the NAPRTase family. Transiently phosphorylated on a His residue during the reaction cycle. Phosphorylation strongly increases the affinity for substrates and increases the rate of nicotinate D-ribonucleotide production. Dephosphorylation regenerates the low-affinity form of the enzyme, leading to product release.

The enzyme catalyses nicotinate + 5-phospho-alpha-D-ribose 1-diphosphate + ATP + H2O = nicotinate beta-D-ribonucleotide + ADP + phosphate + diphosphate. The protein operates within cofactor biosynthesis; NAD(+) biosynthesis; nicotinate D-ribonucleotide from nicotinate: step 1/1. In terms of biological role, catalyzes the synthesis of beta-nicotinate D-ribonucleotide from nicotinate and 5-phospho-D-ribose 1-phosphate at the expense of ATP. The polypeptide is Nicotinate phosphoribosyltransferase (Sodalis glossinidius (strain morsitans)).